The sequence spans 535 residues: MEEGRRGDREAKSAAGWTALSTTKTTLEEKRRLQANGSVGGDAGTSGFRRIVRLFFACMVAGGIQYGWALQLSLLSPYSQTLGISHSYVSLTWICGPIAGFVVQPIVGYYSDRCTMKMGRRRPFILVGCLIICISVMIIGFSADIGRHLGDTKEHCSTYTGPRWSAAMVYIVGFWFLDFANNTVQGPARAMMADLSAGHHGPNVGQSIFSLWMAIGSVLGYLSGANGKWHEWFPWLKTAACCDACANLKGAFFTAVLLIVVSMTVTMYLADEMPLDKQDVDTSGGGGCAVFVDLFKSLRNLPPAMFKVLAVTAVTWLSWFPFIQYNTDWMGREIYHGEPQGTAAKADVYDAGVREGAMGLLFCSVALGVTSFVIPKLCRRLTSKVVWSISNFLVFALMAVMVAVGMVSMRGYRPSLAAGLTGPDPTLKAVALVVFALIGIPQAVLFSVPWAVASEVTAEEGGGQGLAIGVLNIAIVVPQLVIALTAGPIDGAFNKGNTPAFGIGGAFAFICGVLALIWLPKTRGVSNAAVVAGGH.

Topologically, residues 1 to 53 are cytoplasmic; it reads MEEGRRGDREAKSAAGWTALSTTKTTLEEKRRLQANGSVGGDAGTSGFRRIVR. Residues 54 to 74 form a helical membrane-spanning segment; the sequence is LFFACMVAGGIQYGWALQLSL. The Extracellular segment spans residues 75 to 87; that stretch reads LSPYSQTLGISHS. A helical transmembrane segment spans residues 88-108; sequence YVSLTWICGPIAGFVVQPIVG. The Cytoplasmic segment spans residues 109 to 122; it reads YYSDRCTMKMGRRR. The chain crosses the membrane as a helical span at residues 123 to 143; that stretch reads PFILVGCLIICISVMIIGFSA. Topologically, residues 144–163 are extracellular; the sequence is DIGRHLGDTKEHCSTYTGPR. A helical transmembrane segment spans residues 164 to 184; sequence WSAAMVYIVGFWFLDFANNTV. The Cytoplasmic portion of the chain corresponds to 185–203; the sequence is QGPARAMMADLSAGHHGPN. A helical membrane pass occupies residues 204-224; it reads VGQSIFSLWMAIGSVLGYLSG. The Extracellular portion of the chain corresponds to 225 to 249; it reads ANGKWHEWFPWLKTAACCDACANLK. A helical transmembrane segment spans residues 250–270; sequence GAFFTAVLLIVVSMTVTMYLA. Residues 271–302 lie on the Cytoplasmic side of the membrane; sequence DEMPLDKQDVDTSGGGGCAVFVDLFKSLRNLP. A helical transmembrane segment spans residues 303 to 323; that stretch reads PAMFKVLAVTAVTWLSWFPFI. At 324–354 the chain is on the extracellular side; the sequence is QYNTDWMGREIYHGEPQGTAAKADVYDAGVR. A helical membrane pass occupies residues 355–375; that stretch reads EGAMGLLFCSVALGVTSFVIP. At 376–384 the chain is on the cytoplasmic side; it reads KLCRRLTSK. A helical membrane pass occupies residues 385 to 405; sequence VVWSISNFLVFALMAVMVAVG. The Extracellular segment spans residues 406–429; the sequence is MVSMRGYRPSLAAGLTGPDPTLKA. Residues 430–450 traverse the membrane as a helical segment; the sequence is VALVVFALIGIPQAVLFSVPW. Residues 451-465 lie on the Cytoplasmic side of the membrane; sequence AVASEVTAEEGGGQG. Residues 466–486 traverse the membrane as a helical segment; it reads LAIGVLNIAIVVPQLVIALTA. Residues 487 to 498 lie on the Extracellular side of the membrane; it reads GPIDGAFNKGNT. Residues 499–519 form a helical membrane-spanning segment; it reads PAFGIGGAFAFICGVLALIWL. At 520 to 535 the chain is on the cytoplasmic side; sequence PKTRGVSNAAVVAGGH.

It belongs to the glycoside-pentoside-hexuronide (GPH) cation symporter transporter (TC 2.A.2.4) family. As to quaternary structure, homodimer.

It localises to the cell membrane. It functions in the pathway glycan biosynthesis; sucrose metabolism. Responsible for the transport of sucrose into the cell, with the concomitant uptake of protons (symport system). May also transport other glucosides. The polypeptide is Sucrose transport protein SUT5 (SUT5) (Oryza sativa subsp. indica (Rice)).